Here is a 187-residue protein sequence, read N- to C-terminus: GTP cyclohydrolase 1 (187 aa).

Residues Cys76, His79, and Cys148 each contribute to the Zn(2+) site.

This sequence belongs to the GTP cyclohydrolase I family. As to quaternary structure, toroid-shaped homodecamer, composed of two pentamers of five dimers.

It carries out the reaction GTP + H2O = 7,8-dihydroneopterin 3'-triphosphate + formate + H(+). It participates in cofactor biosynthesis; 7,8-dihydroneopterin triphosphate biosynthesis; 7,8-dihydroneopterin triphosphate from GTP: step 1/1. This Streptococcus thermophilus (strain CNRZ 1066) protein is GTP cyclohydrolase 1.